We begin with the raw amino-acid sequence, 282 residues long: Succinate dehydrogenase [ubiquinone] iron-sulfur subunit, mitochondrial (282 aa).

The transit peptide at 1–30 (MAAVVGVSLKRGFSATALGRVGLQFQACRE) directs the protein to the mitochondrion. N6-acetyllysine is present on residues Lys53 and Lys57. The region spanning 56–135 (DKPRMQTYKV…VSKIYPLPHM (80 aa)) is the 2Fe-2S ferredoxin-type domain. 4 residues coordinate [2Fe-2S] cluster: Cys95, Cys100, Cys103, and Cys115. The interaction with SDHAF1 stretch occupies residues 148–220 (FYAQYKSIEP…PAVLMQAYRW (73 aa)). The 31-residue stretch at 178 to 208 (DREKLDGLYECILCACCSTSCPSYWWNGDKY) folds into the 4Fe-4S ferredoxin-type domain. Residues Cys188, Cys191, and Cys194 each coordinate [4Fe-4S] cluster. Cys198 contacts [3Fe-4S] cluster. Trp203 contacts a ubiquinone. Residues Cys245 and Cys251 each contribute to the [3Fe-4S] cluster site. Residue Cys255 coordinates [4Fe-4S] cluster.

This sequence belongs to the succinate dehydrogenase/fumarate reductase iron-sulfur protein family. As to quaternary structure, component of complex II composed of four subunits: the flavoprotein (FP) SDHA, iron-sulfur protein (IP) SDHB, and a cytochrome b560 composed of SDHC and SDHD. Interacts with SDHAF1; the interaction is required for iron-sulfur cluster incorporation into SDHB. [2Fe-2S] cluster serves as cofactor. [3Fe-4S] cluster is required as a cofactor. Requires [4Fe-4S] cluster as cofactor.

It localises to the mitochondrion inner membrane. It carries out the reaction a quinone + succinate = fumarate + a quinol. The enzyme catalyses (R)-malate + a quinone = enol-oxaloacetate + a quinol. The catalysed reaction is (S)-malate + a quinone = enol-oxaloacetate + a quinol. It participates in carbohydrate metabolism; tricarboxylic acid cycle; fumarate from succinate (eukaryal route): step 1/1. Its activity is regulated as follows. Enol-oxaloacetate inhibits the succinate dehydrogenase activity. Iron-sulfur protein (IP) subunit of the succinate dehydrogenase complex (mitochondrial respiratory chain complex II), responsible for transferring electrons from succinate to ubiquinone (coenzyme Q). SDH also oxidizes malate to the non-canonical enol form of oxaloacetate, enol-oxaloacetate. Enol-oxaloacetate, which is a potent inhibitor of the succinate dehydrogenase activity, is further isomerized into keto-oxaloacetate. This is Succinate dehydrogenase [ubiquinone] iron-sulfur subunit, mitochondrial (Sdhb) from Rattus norvegicus (Rat).